The sequence spans 445 residues: Phosphoglucosamine mutase (445 aa).

S102 functions as the Phosphoserine intermediate in the catalytic mechanism. Mg(2+) contacts are provided by S102, D241, D243, and D245. Position 102 is a phosphoserine (S102).

Belongs to the phosphohexose mutase family. The cofactor is Mg(2+). Activated by phosphorylation.

It carries out the reaction alpha-D-glucosamine 1-phosphate = D-glucosamine 6-phosphate. In terms of biological role, catalyzes the conversion of glucosamine-6-phosphate to glucosamine-1-phosphate. This Edwardsiella ictaluri (strain 93-146) protein is Phosphoglucosamine mutase.